The sequence spans 249 residues: uncharacterized protein (249 aa).

This is an uncharacterized protein from Colorado tick fever virus (strain USA/Florio N-7180) (CTFV).